The primary structure comprises 164 residues: Diphosphoinositol polyphosphate phosphohydrolase 3-alpha (164 aa).

Residues arginine 9, 17–19 (KKR), and 38–40 (SSR) each bind substrate. The Nudix hydrolase domain maps to 17-144 (KKRAACLCFR…VHAEYLEKLK (128 aa)). The Mg(2+) site is built by glycine 49 and glutamate 65. A Nudix box motif is present at residues 50–71 (GGMEPEEEPGGAAVREVYEEAG). Glutamate 68 serves as the catalytic Proton acceptor. Glutamate 69 is a Mg(2+) binding site. Substrate contacts are provided by residues 89-91 (PKH), arginine 115, and lysine 133. A disordered region spans residues 144–164 (KLGGSPTNGNSMAPSSPDSDP). Residues 148–164 (SPTNGNSMAPSSPDSDP) are compositionally biased toward polar residues.

This sequence belongs to the Nudix hydrolase family. DIPP subfamily. Requires Mg(2+) as cofactor. Mn(2+) serves as cofactor. In terms of tissue distribution, mainly expressed in testis and, at lower level in brain. According to PubMed:12121577, it is widely expressed.

The protein resides in the cytoplasm. The enzyme catalyses diphospho-myo-inositol polyphosphate + H2O = myo-inositol polyphosphate + phosphate.. It carries out the reaction P(1),P(6)-bis(5'-adenosyl) hexaphosphate + H2O = adenosine 5'-pentaphosphate + AMP + 2 H(+). The catalysed reaction is P(1),P(5)-bis(5'-adenosyl) pentaphosphate + H2O = adenosine 5'-tetraphosphate + AMP + 2 H(+). Its function is as follows. Cleaves a beta-phosphate from the diphosphate groups in PP-InsP5 (diphosphoinositol pentakisphosphate), suggesting that it may play a role in signal transduction. Also able to catalyze the hydrolysis of dinucleoside oligophosphates, with Ap6A and Ap5A being the preferred substrates. The major reaction products are ADP and p4a from Ap6A and ADP and ATP from Ap5A. Also able to hydrolyze 5-phosphoribose 1-diphosphate. This is Diphosphoinositol polyphosphate phosphohydrolase 3-alpha (NUDT10) from Homo sapiens (Human).